The sequence spans 501 residues: Cobyric acid synthase (501 aa).

The 198-residue stretch at glutamate 253 to tryptophan 450 folds into the GATase cobBQ-type domain. Cysteine 334 functions as the Nucleophile in the catalytic mechanism. The active site involves histidine 442.

Belongs to the CobB/CobQ family. CobQ subfamily.

It participates in cofactor biosynthesis; adenosylcobalamin biosynthesis. Catalyzes amidations at positions B, D, E, and G on adenosylcobyrinic A,C-diamide. NH(2) groups are provided by glutamine, and one molecule of ATP is hydrogenolyzed for each amidation. This Prochlorococcus marinus (strain MIT 9313) protein is Cobyric acid synthase.